Here is a 682-residue protein sequence, read N- to C-terminus: Potassium-transporting ATPase ATP-binding subunit (682 aa).

4 helical membrane passes run 44 to 64 (VMAVVMGGTLLAAVITASGHG), 66 to 86 (AGFGWAVTAILFVTVLFGNFA), 233 to 253 (LTFLIVVASLPAIAGFVGVTL), and 257 to 277 (LLIALLVCLIPTTIGGLLPAI). The active-site 4-aspartylphosphate intermediate is the D310. ATP-binding positions include D347, E351, 377 to 384 (FTAQTRMS), and K395. Mg(2+)-binding residues include D518 and D522. Helical transmembrane passes span 588–608 (FAILPALFAAAIPSMAALNVM), 616–636 (AVLAALIFNALIIPALIPLAL), and 658–678 (GLGGVLLPFAAIKLIDLALVA).

Belongs to the cation transport ATPase (P-type) (TC 3.A.3) family. Type IA subfamily. As to quaternary structure, the system is composed of three essential subunits: KdpA, KdpB and KdpC.

Its subcellular location is the cell inner membrane. It catalyses the reaction K(+)(out) + ATP + H2O = K(+)(in) + ADP + phosphate + H(+). Functionally, part of the high-affinity ATP-driven potassium transport (or Kdp) system, which catalyzes the hydrolysis of ATP coupled with the electrogenic transport of potassium into the cytoplasm. This subunit is responsible for energy coupling to the transport system and for the release of the potassium ions to the cytoplasm. The protein is Potassium-transporting ATPase ATP-binding subunit of Xanthomonas campestris pv. campestris (strain ATCC 33913 / DSM 3586 / NCPPB 528 / LMG 568 / P 25).